The following is a 514-amino-acid chain: ATP synthase subunit alpha (514 aa).

170-177 (GDRQIGKT) lines the ATP pocket.

The protein belongs to the ATPase alpha/beta chains family. In terms of assembly, F-type ATPases have 2 components, CF(1) - the catalytic core - and CF(0) - the membrane proton channel. CF(1) has five subunits: alpha(3), beta(3), gamma(1), delta(1), epsilon(1). CF(0) has three main subunits: a(1), b(2) and c(9-12). The alpha and beta chains form an alternating ring which encloses part of the gamma chain. CF(1) is attached to CF(0) by a central stalk formed by the gamma and epsilon chains, while a peripheral stalk is formed by the delta and b chains.

It is found in the cell inner membrane. The catalysed reaction is ATP + H2O + 4 H(+)(in) = ADP + phosphate + 5 H(+)(out). Functionally, produces ATP from ADP in the presence of a proton gradient across the membrane. The alpha chain is a regulatory subunit. The polypeptide is ATP synthase subunit alpha (Pseudomonas fluorescens (strain ATCC BAA-477 / NRRL B-23932 / Pf-5)).